Here is a 286-residue protein sequence, read N- to C-terminus: MQIVHTLADLRAALAPVRRSAGTIAFVPTMGNLHEGHLALVRQARERVGAAGTVVASIFVNRLQFAPHEDFDRYPRTLARDAELLAPAGCDLVFAPAEAELYPQPQTFKVQPDPALAELLEGHFRPGFFTGVCTVVMKLFSIVQPQVAVFGKKDYQQLMVLRRMVEQFALPIEVLGGETLRAHDGLALSSRNGYLGAAEREQALQLSAALRDLLGAVRAGGAPLETLEAQACTALRAQGWLPDYLCVRRRTDLLPPGADEIAAGLPLVALGAARLGNTRLIDNLEG.

30-37 (MGNLHEGH) serves as a coordination point for ATP. H37 acts as the Proton donor in catalysis. (R)-pantoate is bound at residue Q64. Position 64 (Q64) interacts with beta-alanine. 151–154 (GKKD) is a binding site for ATP. Q157 provides a ligand contact to (R)-pantoate. Residues L180 and 188–191 (LSSR) contribute to the ATP site.

This sequence belongs to the pantothenate synthetase family. In terms of assembly, homodimer.

It is found in the cytoplasm. The enzyme catalyses (R)-pantoate + beta-alanine + ATP = (R)-pantothenate + AMP + diphosphate + H(+). It functions in the pathway cofactor biosynthesis; (R)-pantothenate biosynthesis; (R)-pantothenate from (R)-pantoate and beta-alanine: step 1/1. Catalyzes the condensation of pantoate with beta-alanine in an ATP-dependent reaction via a pantoyl-adenylate intermediate. This is Pantothenate synthetase from Leptothrix cholodnii (strain ATCC 51168 / LMG 8142 / SP-6) (Leptothrix discophora (strain SP-6)).